The sequence spans 301 residues: Protein FdhE homolog (301 aa).

This sequence belongs to the FdhE family.

Its subcellular location is the cytoplasm. Its function is as follows. Necessary for formate dehydrogenase activity. The sequence is that of Protein FdhE homolog from Shewanella baltica (strain OS185).